The primary structure comprises 162 residues: Transcription antitermination protein NusB (162 aa).

The protein belongs to the NusB family.

Functionally, involved in transcription antitermination. Required for transcription of ribosomal RNA (rRNA) genes. Binds specifically to the boxA antiterminator sequence of the ribosomal RNA (rrn) operons. This Xanthomonas euvesicatoria pv. vesicatoria (strain 85-10) (Xanthomonas campestris pv. vesicatoria) protein is Transcription antitermination protein NusB.